A 221-amino-acid polypeptide reads, in one-letter code: uncharacterized protein (221 aa).

Positions 1-16 are enriched in basic and acidic residues; that stretch reads MESSRWDKDPPGERRP. Positions 1 to 64 are disordered; the sequence is MESSRWDKDP…SHTPQTNTRR (64 aa).

This is an uncharacterized protein from Homo sapiens (Human).